Reading from the N-terminus, the 214-residue chain is ATP phosphoribosyltransferase (214 aa).

It belongs to the ATP phosphoribosyltransferase family. Short subfamily. Heteromultimer composed of HisG and HisZ subunits.

The protein resides in the cytoplasm. The catalysed reaction is 1-(5-phospho-beta-D-ribosyl)-ATP + diphosphate = 5-phospho-alpha-D-ribose 1-diphosphate + ATP. The protein operates within amino-acid biosynthesis; L-histidine biosynthesis; L-histidine from 5-phospho-alpha-D-ribose 1-diphosphate: step 1/9. Catalyzes the condensation of ATP and 5-phosphoribose 1-diphosphate to form N'-(5'-phosphoribosyl)-ATP (PR-ATP). Has a crucial role in the pathway because the rate of histidine biosynthesis seems to be controlled primarily by regulation of HisG enzymatic activity. The chain is ATP phosphoribosyltransferase from Streptococcus sanguinis (strain SK36).